Reading from the N-terminus, the 806-residue chain is Glycerol-3-phosphate acyltransferase (806 aa).

The HXXXXD motif motif lies at 305–310 (CHRSHM).

Belongs to the GPAT/DAPAT family.

The protein resides in the cell inner membrane. The catalysed reaction is sn-glycerol 3-phosphate + an acyl-CoA = a 1-acyl-sn-glycero-3-phosphate + CoA. The protein operates within phospholipid metabolism; CDP-diacylglycerol biosynthesis; CDP-diacylglycerol from sn-glycerol 3-phosphate: step 1/3. The polypeptide is Glycerol-3-phosphate acyltransferase (Salmonella arizonae (strain ATCC BAA-731 / CDC346-86 / RSK2980)).